The chain runs to 394 residues: MPSRNILVINCGSSSIKFALVNEAHSLFPLHGLAERLGSRDAVLRWKRGGDSDSLMIPNADHRAALAQLLPMVQNAAGGKLHGIGHRVVHGGELFTHATRIDDRVVEAIRATAPLAPLHNPANLQGIEAAMTLFPKLPHVAVFDTAFHQSLPEHAYRYALPEALYREHGVRRYGFHGTSHRYVSHRAAEMAGLAVGDSSWLSAHLGNGSSTCAIVNGQSLDTSMGLTPLEGLVMGTRSGDVDPNLHSHLARTLGWSLERIDSMLNNESGLLGLSDLSNDMRTLEQEREQGHPGAALAIEVFCYRLAKSLAAMSCALPQLDGVIFTGGIGENSPLVRAKTAAHLRLFDLRLDQEANARCVRGVAGPIQAAGHPRVLVIPTNEERQIALDTLALLD.

Asn10 lines the Mg(2+) pocket. Lys17 is a binding site for ATP. Substrate is bound at residue Arg87. Asp144 serves as the catalytic Proton donor/acceptor. ATP-binding positions include 204 to 208, 279 to 281, and 327 to 331; these read HLGNG, DMR, and GIGEN. Glu381 is a Mg(2+) binding site.

The protein belongs to the acetokinase family. As to quaternary structure, homodimer. The cofactor is Mg(2+). It depends on Mn(2+) as a cofactor.

It localises to the cytoplasm. The enzyme catalyses acetate + ATP = acetyl phosphate + ADP. The protein operates within metabolic intermediate biosynthesis; acetyl-CoA biosynthesis; acetyl-CoA from acetate: step 1/2. Functionally, catalyzes the formation of acetyl phosphate from acetate and ATP. Can also catalyze the reverse reaction. This Pseudomonas aeruginosa (strain LESB58) protein is Acetate kinase.